Reading from the N-terminus, the 207-residue chain is ATP synthase subunit b 2 (207 aa).

Positions 1–31 (MVAQAAPPAGTAGQGTHEAASAAHGAAAAHG) are enriched in low complexity. The tract at residues 1-41 (MVAQAAPPAGTAGQGTHEAASAAHGAAAAHGAAEEGHGKKS) is disordered. The helical transmembrane segment at 48 to 70 (ATTFASQLLWLVLSFGLLYLLMS) threads the bilayer.

This sequence belongs to the ATPase B chain family. As to quaternary structure, F-type ATPases have 2 components, F(1) - the catalytic core - and F(0) - the membrane proton channel. F(1) has five subunits: alpha(3), beta(3), gamma(1), delta(1), epsilon(1). F(0) has three main subunits: a(1), b(2) and c(10-14). The alpha and beta chains form an alternating ring which encloses part of the gamma chain. F(1) is attached to F(0) by a central stalk formed by the gamma and epsilon chains, while a peripheral stalk is formed by the delta and b chains.

Its subcellular location is the cell inner membrane. Its function is as follows. F(1)F(0) ATP synthase produces ATP from ADP in the presence of a proton or sodium gradient. F-type ATPases consist of two structural domains, F(1) containing the extramembraneous catalytic core and F(0) containing the membrane proton channel, linked together by a central stalk and a peripheral stalk. During catalysis, ATP synthesis in the catalytic domain of F(1) is coupled via a rotary mechanism of the central stalk subunits to proton translocation. Functionally, component of the F(0) channel, it forms part of the peripheral stalk, linking F(1) to F(0). The sequence is that of ATP synthase subunit b 2 from Xanthobacter autotrophicus (strain ATCC BAA-1158 / Py2).